Reading from the N-terminus, the 1297-residue chain is Phosphoribosylformylglycinamidine synthase (1297 aa).

ATP-binding positions include 307 to 318 (GASTGSGGEIRD) and Ala678. Glu718, Asn722, and Asp886 together coordinate Mg(2+). One can recognise a Glutamine amidotransferase type-1 domain in the interval 1044 to 1297 (MAILREQGVN…MFQNARKNLG (254 aa)). The Nucleophile role is filled by Cys1137. Catalysis depends on residues His1262 and Glu1264.

This sequence in the N-terminal section; belongs to the FGAMS family. As to quaternary structure, monomer.

It is found in the cytoplasm. It carries out the reaction N(2)-formyl-N(1)-(5-phospho-beta-D-ribosyl)glycinamide + L-glutamine + ATP + H2O = 2-formamido-N(1)-(5-O-phospho-beta-D-ribosyl)acetamidine + L-glutamate + ADP + phosphate + H(+). Its pathway is purine metabolism; IMP biosynthesis via de novo pathway; 5-amino-1-(5-phospho-D-ribosyl)imidazole from N(2)-formyl-N(1)-(5-phospho-D-ribosyl)glycinamide: step 1/2. Phosphoribosylformylglycinamidine synthase involved in the purines biosynthetic pathway. Catalyzes the ATP-dependent conversion of formylglycinamide ribonucleotide (FGAR) and glutamine to yield formylglycinamidine ribonucleotide (FGAM) and glutamate. The chain is Phosphoribosylformylglycinamidine synthase from Vibrio vulnificus (strain CMCP6).